Here is a 243-residue protein sequence, read N- to C-terminus: rRNA adenine N-6-methyltransferase (243 aa).

Residues N11, I13, G38, E59, D84, and N101 each contribute to the S-adenosyl-L-methionine site.

Belongs to the class I-like SAM-binding methyltransferase superfamily. rRNA adenine N(6)-methyltransferase family.

It carries out the reaction adenosine(2085) in 23S rRNA + 2 S-adenosyl-L-methionine = N(6)-dimethyladenosine(2085) in 23S rRNA + 2 S-adenosyl-L-homocysteine + 2 H(+). Its function is as follows. This protein produces a dimethylation of the adenine residue at position 2085 in 23S rRNA, resulting in reduced affinity between ribosomes and macrolide-lincosamide-streptogramin B antibiotics. The protein is rRNA adenine N-6-methyltransferase (ermA1) of Staphylococcus aureus (strain Mu50 / ATCC 700699).